Reading from the N-terminus, the 105-residue chain is Translation initiation factor 1A 2 (105 aa).

The interval 1 to 22 (MRKRREGSAAPSTQEVTRVRTP) is disordered. Residues 17-91 (TRVRTPRKEN…TKADVIWKYT (75 aa)) enclose the S1-like domain.

It belongs to the eIF-1A family.

In terms of biological role, seems to be required for maximal rate of protein biosynthesis. Enhances ribosome dissociation into subunits and stabilizes the binding of the initiator Met-tRNA(I) to 40 S ribosomal subunits. The polypeptide is Translation initiation factor 1A 2 (eIF1A2) (Methanosarcina acetivorans (strain ATCC 35395 / DSM 2834 / JCM 12185 / C2A)).